Here is a 155-residue protein sequence, read N- to C-terminus: Interleukin-2 (155 aa).

The N-terminal stretch at 1-20 is a signal peptide; that stretch reads MYKIQLLSCIALTLALVANG. Thr-23 carries an O-linked (GalNAc...) threonine glycan. Residues Cys-79 and Cys-127 are joined by a disulfide bond.

This sequence belongs to the IL-2 family.

The protein localises to the secreted. Cytokine produced by activated CD4-positive helper T-cells and to a lesser extend activated CD8-positive T-cells and natural killer (NK) cells that plays pivotal roles in the immune response and tolerance. Binds to a receptor complex composed of either the high-affinity trimeric IL-2R (IL2RA/CD25, IL2RB/CD122 and IL2RG/CD132) or the low-affinity dimeric IL-2R (IL2RB and IL2RG). Interaction with the receptor leads to oligomerization and conformation changes in the IL-2R subunits resulting in downstream signaling starting with phosphorylation of JAK1 and JAK3. In turn, JAK1 and JAK3 phosphorylate the receptor to form a docking site leading to the phosphorylation of several substrates including STAT5. This process leads to activation of several pathways including STAT, phosphoinositide-3-kinase/PI3K and mitogen-activated protein kinase/MAPK pathways. Functions as a T-cell growth factor and can increase NK-cell cytolytic activity as well. Promotes strong proliferation of activated B-cells and subsequently immunoglobulin production. Plays a pivotal role in regulating the adaptive immune system by controlling the survival and proliferation of regulatory T-cells, which are required for the maintenance of immune tolerance. Moreover, participates in the differentiation and homeostasis of effector T-cell subsets, including Th1, Th2, Th17 as well as memory CD8-positive T-cells. This is Interleukin-2 (IL2) from Moschus berezovskii (Chinese forest musk deer).